The chain runs to 350 residues: Ornithine cyclodeaminase (350 aa).

The L-ornithine site is built by Arg-45 and Lys-69. NAD(+) contacts are provided by residues Thr-84, Arg-112, 139–140, Asp-161, Thr-202, 225–228, Lys-232, and Ser-293; these read AQ and VGGD. Residue Arg-112 coordinates L-ornithine. Asp-228 is an L-ornithine binding site. Residue Asp-228 is the Proton donor/acceptor of the active site. Val-294 contributes to the L-ornithine binding site. Lys-331 is an NAD(+) binding site.

The protein belongs to the ornithine cyclodeaminase/mu-crystallin family. Homodimer. It depends on NAD(+) as a cofactor.

The enzyme catalyses L-ornithine = L-proline + NH4(+). It functions in the pathway amino-acid biosynthesis; L-proline biosynthesis; L-proline from L-ornithine: step 1/1. In terms of biological role, catalyzes the conversion of L-ornithine into L-proline with release of ammonia. Is likely involved in the L-ornithine degradation pathway that allows P.putida to utilize this compound as sole carbon and nitrogen source. The polypeptide is Ornithine cyclodeaminase (Pseudomonas putida (strain ATCC 47054 / DSM 6125 / CFBP 8728 / NCIMB 11950 / KT2440)).